Reading from the N-terminus, the 892-residue chain is Alanine--tRNA ligase (892 aa).

4 residues coordinate Zn(2+): H594, H598, C702, and H706.

Belongs to the class-II aminoacyl-tRNA synthetase family. Requires Zn(2+) as cofactor.

The protein resides in the cytoplasm. The catalysed reaction is tRNA(Ala) + L-alanine + ATP = L-alanyl-tRNA(Ala) + AMP + diphosphate. Functionally, catalyzes the attachment of alanine to tRNA(Ala) in a two-step reaction: alanine is first activated by ATP to form Ala-AMP and then transferred to the acceptor end of tRNA(Ala). Also edits incorrectly charged Ser-tRNA(Ala) and Gly-tRNA(Ala) via its editing domain. The protein is Alanine--tRNA ligase of Pyrobaculum neutrophilum (strain DSM 2338 / JCM 9278 / NBRC 100436 / V24Sta) (Thermoproteus neutrophilus).